A 191-amino-acid chain; its full sequence is Probable chemoreceptor glutamine deamidase CheD (191 aa).

Belongs to the CheD family.

It catalyses the reaction L-glutaminyl-[protein] + H2O = L-glutamyl-[protein] + NH4(+). Its function is as follows. Probably deamidates glutamine residues to glutamate on methyl-accepting chemotaxis receptors (MCPs), playing an important role in chemotaxis. This chain is Probable chemoreceptor glutamine deamidase CheD, found in Hydrogenovibrio crunogenus (strain DSM 25203 / XCL-2) (Thiomicrospira crunogena).